Consider the following 540-residue polypeptide: Isocitrate lyase (540 aa).

Ser103 to Trp105 is a substrate binding site. Asp187 lines the Mg(2+) pocket. Cys225 functions as the Proton acceptor in the catalytic mechanism. Substrate-binding positions include Gly226–His227, Asn385–Ser389, and Thr458.

This sequence belongs to the isocitrate lyase/PEP mutase superfamily. Isocitrate lyase family. As to quaternary structure, homotetramer. The cofactor is Mg(2+).

The enzyme catalyses D-threo-isocitrate = glyoxylate + succinate. It functions in the pathway carbohydrate metabolism; glyoxylate cycle; (S)-malate from isocitrate: step 1/2. Its pathway is one-carbon metabolism; formaldehyde assimilation via serine pathway. Its activity is regulated as follows. In the presence of magnesium, inhibited by oxalate, potassium cyanide, manganese, silver, cadmium and to a lesser extent by succinate, glycolate, iodoacetamide, DL-penicillamine, aluminum, sodium, potassium, lithium and strontium. In terms of biological role, involved in the metabolic adaptation in response to environmental changes. Catalyzes the reversible formation of succinate and glyoxylate from isocitrate, a key step of the glyoxylate cycle, which operates as an anaplerotic route for replenishing the tricarboxylic acid cycle during growth on fatty acid substrates. May be involved in the assimilation of one-carbon compounds via the isocitrate lyase-positive serine pathway. The sequence is that of Isocitrate lyase from Hyphomicrobium methylovorum.